The sequence spans 1248 residues: Probable serine/threonine-protein kinase DDB_G0278509 (1248 aa).

Disordered stretches follow at residues 1–26 (MSKV…NGEY), 40–61 (SVNG…EEDY), 100–125 (QSYK…DHLE), 180–220 (QNNN…TKNN), and 235–338 (SIDS…NNNK). Over residues 102 to 117 (YKLSNSGESMNRSINQ) the composition is skewed to polar residues. The span at 181 to 216 (NNNNNNSNSNSNSNSNSNNNNNNNNNNNNNNNNNNN) shows a compositional bias: low complexity. LRR repeat units lie at residues 386–407 (SSTE…DEKE), 411–432 (GYKI…AFTN), 435–457 (NLEQ…EFLK), 458–480 (HLTI…GNLS), 481–502 (FLRE…GNLY), 503–524 (NLKK…CVEP), 527–548 (QLQT…TTTT), 572–593 (NLKQ…LRHL), 595–616 (KLHS…VVAS), 619–641 (RLAK…NNLS), 642–663 (SLIE…ICYL), 665–687 (NLKK…GFLT), and 688–708 (KLVD…SFLK). Positions 825 to 873 (YPFQKLDPIPQSLYSSSNPRSHTESDIQKLKNNDETITTTNSSISTTSS) are disordered. Positions 845–858 (SHTESDIQKLKNND) are enriched in basic and acidic residues. A compositionally biased stretch (low complexity) spans 860 to 873 (TITTTNSSISTTSS). A Protein kinase domain is found at 946–1239 (IQFFNLIGQG…SIYHRLENLM (294 aa)). ATP is bound by residues 952 to 960 (IGQGGFSKV) and Lys-973. The Proton acceptor role is filled by Asp-1069. The disordered stretch occupies residues 1106 to 1135 (NNTNNTATSSTTTSSANGANSISNNNNNGT).

The protein belongs to the protein kinase superfamily. TKL Ser/Thr protein kinase family.

The enzyme catalyses L-seryl-[protein] + ATP = O-phospho-L-seryl-[protein] + ADP + H(+). It catalyses the reaction L-threonyl-[protein] + ATP = O-phospho-L-threonyl-[protein] + ADP + H(+). The polypeptide is Probable serine/threonine-protein kinase DDB_G0278509 (Dictyostelium discoideum (Social amoeba)).